The chain runs to 528 residues: Tyrosine--tRNA ligase, cytoplasmic (528 aa).

Met-1 carries the post-translational modification N-acetylmethionine. Gly-2 carries the N-acetylglycine; in Tyrosine--tRNA ligase, cytoplasmic, N-terminally processed modification. Residue Tyr-39 participates in L-tyrosine binding. Tyr-39 serves as a coordination point for trans-resveratrol. The 'HIGH' region signature appears at 44–52; sequence TTGKPHVAY. L-tyrosine contacts are provided by Tyr-166, Gln-170, Asp-173, and Gln-188. Trans-resveratrol contacts are provided by Gln-170 and Asp-173. Lys-197 is modified (N6-acetyllysine). Ser-205 is subject to Phosphoserine. At Lys-206 the chain carries N6-acetyllysine. Positions 222 to 226 match the 'KMSKS' region motif; it reads KMSSS. The Nuclear localization signal motif lies at 242-247; sequence KKKLKK. A disordered region spans residues 339-363; the sequence is AAYPDPSKQKPMAKGPAKNSEPEEV. The tRNA-binding domain maps to 364-468; sequence IPSRLDIRVG…AGSAPGERVF (105 aa). The residue at position 386 (Ser-386) is a Phosphoserine. Lys-474, Lys-482, and Lys-490 each carry N6-acetyllysine.

This sequence belongs to the class-I aminoacyl-tRNA synthetase family. In terms of assembly, homodimer. Interacts (when binding to resveratrol) with PARP1; interaction stimulates the poly-ADP-ribosyltransferase activity of PARP1.

The protein localises to the cytoplasm. It localises to the nucleus. It catalyses the reaction tRNA(Tyr) + L-tyrosine + ATP = L-tyrosyl-tRNA(Tyr) + AMP + diphosphate + H(+). Resveratrol strongly inhibits the tyrosine--tRNA ligase activity. Functionally, tyrosine--tRNA ligase that catalyzes the attachment of tyrosine to tRNA(Tyr) in a two-step reaction: tyrosine is first activated by ATP to form Tyr-AMP and then transferred to the acceptor end of tRNA(Tyr). Also acts as a positive regulator of poly-ADP-ribosylation in the nucleus, independently of its tyrosine--tRNA ligase activity. Activity is switched upon resveratrol-binding: resveratrol strongly inhibits the tyrosine--tRNA ligase activity and promotes relocalization to the nucleus, where YARS1 specifically stimulates the poly-ADP-ribosyltransferase activity of PARP1. The sequence is that of Tyrosine--tRNA ligase, cytoplasmic (YARS1) from Pongo abelii (Sumatran orangutan).